Consider the following 690-residue polypeptide: UvrABC system protein C (690 aa).

Residues 1 to 60 form a disordered region; sequence MTTDSSDPAKPAGPGQPPGSGADTRPGGLATGQDVDPATIETDEDDEARLPDVPDEPTDA. Residues 41-58 are compositionally biased toward acidic residues; sequence ETDEDDEARLPDVPDEPT. A GIY-YIG domain is found at 82–160; it reads TSPGVYRMMN…IKQLRPRFNV (79 aa). The UVR domain occupies 270–305; it reads RAVKEELAREMEKASGDLAFERAALYRDRLAALSAI.

This sequence belongs to the UvrC family. Interacts with UvrB in an incision complex.

The protein localises to the cytoplasm. In terms of biological role, the UvrABC repair system catalyzes the recognition and processing of DNA lesions. UvrC both incises the 5' and 3' sides of the lesion. The N-terminal half is responsible for the 3' incision and the C-terminal half is responsible for the 5' incision. The sequence is that of UvrABC system protein C from Nitrobacter hamburgensis (strain DSM 10229 / NCIMB 13809 / X14).